Here is a 351-residue protein sequence, read N- to C-terminus: V-type proton ATPase subunit d1 (351 aa).

This sequence belongs to the V-ATPase V0D/AC39 subunit family. As to quaternary structure, V-ATPase is a heteromultimeric enzyme composed of a peripheral catalytic V1 complex (components A to H) attached to an integral membrane V0 proton pore complex (components: a, c, c'', d and e).

It localises to the vacuole membrane. Functionally, subunit of the integral membrane V0 complex of vacuolar ATPase. Vacuolar ATPase is responsible for acidifying a variety of intracellular compartments in eukaryotic cells, thus providing most of the energy required for transport processes in the vacuolar system. This chain is V-type proton ATPase subunit d1 (VHA-d1), found in Arabidopsis thaliana (Mouse-ear cress).